The sequence spans 476 residues: Angiotensinogen (476 aa).

The first 24 residues, 1 to 24 (MAPAGVSLRATILCLVAWAGLAAG), serve as a signal peptide directing secretion. N-linked (GlcNAc...) asparagine glycosylation is found at N38, N161, N295, and N319. C42 and C162 form a disulfide bridge.

Belongs to the serpin family. In response to low blood pressure, the enzyme renin/REN cleaves angiotensinogen to produce angiotensin-1. Angiotensin-1 is a substrate of ACE (angiotensin converting enzyme) that removes a dipeptide to yield the physiologically active peptide angiotensin-2. Angiotensin-1 and angiotensin-2 can be further processed to generate angiotensin-3, angiotensin-4. Angiotensin 1-9 is cleaved from angiotensin-1 by ACE2 and can be further processed by ACE to produce angiotensin 1-7, angiotensin 1-5 and angiotensin 1-4. Angiotensin 1-7 has also been proposed to be cleaved from angiotensin-2 by ACE2 or from angiotensin-1 by MME (neprilysin). In terms of processing, the disulfide bond is labile. Angiotensinogen is present in the circulation in a near 40:60 ratio with the oxidized disulfide-bonded form, which preferentially interacts with receptor-bound renin.

The protein localises to the secreted. Functionally, essential component of the renin-angiotensin system (RAS), a potent regulator of blood pressure, body fluid and electrolyte homeostasis. Its function is as follows. Acts directly on vascular smooth muscle as a potent vasoconstrictor, affects cardiac contractility and heart rate through its action on the sympathetic nervous system, and alters renal sodium and water absorption through its ability to stimulate the zona glomerulosa cells of the adrenal cortex to synthesize and secrete aldosterone. Acts by binding to angiotensin receptors AGTR1 and AGTR2. Also binds the DEAR/FBXW7-AS1 receptor. Stimulates aldosterone release. In terms of biological role, is a ligand for the G-protein coupled receptor MAS1. Has vasodilator and antidiuretic effects. Has an antithrombotic effect that involves MAS1-mediated release of nitric oxide from platelets. In Pan troglodytes (Chimpanzee), this protein is Angiotensinogen (AGT).